The following is a 506-amino-acid chain: Histidine ammonia-lyase (506 aa).

Residues 142-144 (ASG) constitute a cross-link (5-imidazolinone (Ala-Gly)). Ser143 is modified (2,3-didehydroalanine (Ser)).

This sequence belongs to the PAL/histidase family. Post-translationally, contains an active site 4-methylidene-imidazol-5-one (MIO), which is formed autocatalytically by cyclization and dehydration of residues Ala-Ser-Gly.

The protein localises to the cytoplasm. It catalyses the reaction L-histidine = trans-urocanate + NH4(+). Its pathway is amino-acid degradation; L-histidine degradation into L-glutamate; N-formimidoyl-L-glutamate from L-histidine: step 1/3. This Bacillus cereus (strain ATCC 14579 / DSM 31 / CCUG 7414 / JCM 2152 / NBRC 15305 / NCIMB 9373 / NCTC 2599 / NRRL B-3711) protein is Histidine ammonia-lyase.